We begin with the raw amino-acid sequence, 270 residues long: Putative F-box protein At3g24700 (270 aa).

Residues 1 to 45 enclose the F-box domain; the sequence is MLTDLPLDLESEILSRVPATSLQRLKTTCKRWYALFRDPRFVKKN.

In Arabidopsis thaliana (Mouse-ear cress), this protein is Putative F-box protein At3g24700.